The following is a 125-amino-acid chain: UPF0231 protein APL_0968 (125 aa).

Belongs to the UPF0231 family.

In Actinobacillus pleuropneumoniae serotype 5b (strain L20), this protein is UPF0231 protein APL_0968.